The chain runs to 429 residues: Glutamyl-tRNA reductase (429 aa).

Substrate is bound by residues threonine 52–arginine 55, serine 110, glutamate 115–glutamine 117, and glutamine 121. Cysteine 53 serves as the catalytic Nucleophile. Glycine 190–isoleucine 195 lines the NADP(+) pocket.

This sequence belongs to the glutamyl-tRNA reductase family. In terms of assembly, homodimer.

The catalysed reaction is (S)-4-amino-5-oxopentanoate + tRNA(Glu) + NADP(+) = L-glutamyl-tRNA(Glu) + NADPH + H(+). Its pathway is porphyrin-containing compound metabolism; protoporphyrin-IX biosynthesis; 5-aminolevulinate from L-glutamyl-tRNA(Glu): step 1/2. Its function is as follows. Catalyzes the NADPH-dependent reduction of glutamyl-tRNA(Glu) to glutamate 1-semialdehyde (GSA). This chain is Glutamyl-tRNA reductase, found in Verminephrobacter eiseniae (strain EF01-2).